The following is a 79-amino-acid chain: ATP synthase subunit c (79 aa).

The next 2 helical transmembrane spans lie at 11–31 (IAVA…IGIL) and 59–79 (LVDA…FAVI).

The protein belongs to the ATPase C chain family. In terms of assembly, F-type ATPases have 2 components, F(1) - the catalytic core - and F(0) - the membrane proton channel. F(1) has five subunits: alpha(3), beta(3), gamma(1), delta(1), epsilon(1). F(0) has three main subunits: a(1), b(2) and c(10-14). The alpha and beta chains form an alternating ring which encloses part of the gamma chain. F(1) is attached to F(0) by a central stalk formed by the gamma and epsilon chains, while a peripheral stalk is formed by the delta and b chains.

It localises to the cell membrane. In terms of biological role, f(1)F(0) ATP synthase produces ATP from ADP in the presence of a proton or sodium gradient. F-type ATPases consist of two structural domains, F(1) containing the extramembraneous catalytic core and F(0) containing the membrane proton channel, linked together by a central stalk and a peripheral stalk. During catalysis, ATP synthesis in the catalytic domain of F(1) is coupled via a rotary mechanism of the central stalk subunits to proton translocation. Key component of the F(0) channel; it plays a direct role in translocation across the membrane. A homomeric c-ring of between 10-14 subunits forms the central stalk rotor element with the F(1) delta and epsilon subunits. This Buchnera aphidicola subsp. Baizongia pistaciae (strain Bp) protein is ATP synthase subunit c.